A 72-amino-acid chain; its full sequence is Translation initiation factor IF-1 (72 aa).

The 72-residue stretch at 1-72 folds into the S1-like domain; that stretch reads MAKQDVIELE…SRGRITYRYK (72 aa).

The protein belongs to the IF-1 family. In terms of assembly, component of the 30S ribosomal translation pre-initiation complex which assembles on the 30S ribosome in the order IF-2 and IF-3, IF-1 and N-formylmethionyl-tRNA(fMet); mRNA recruitment can occur at any time during PIC assembly.

Its subcellular location is the cytoplasm. Functionally, one of the essential components for the initiation of protein synthesis. Stabilizes the binding of IF-2 and IF-3 on the 30S subunit to which N-formylmethionyl-tRNA(fMet) subsequently binds. Helps modulate mRNA selection, yielding the 30S pre-initiation complex (PIC). Upon addition of the 50S ribosomal subunit IF-1, IF-2 and IF-3 are released leaving the mature 70S translation initiation complex. This Staphylococcus epidermidis (strain ATCC 35984 / DSM 28319 / BCRC 17069 / CCUG 31568 / BM 3577 / RP62A) protein is Translation initiation factor IF-1.